Consider the following 246-residue polypeptide: Carboxy-S-adenosyl-L-methionine synthase (246 aa).

S-adenosyl-L-methionine is bound by residues Tyr-39, 64–66 (GCS), 89–90 (DN), 117–118 (DI), Asn-132, and Arg-199.

The protein belongs to the class I-like SAM-binding methyltransferase superfamily. Cx-SAM synthase family. Homodimer.

The catalysed reaction is prephenate + S-adenosyl-L-methionine = carboxy-S-adenosyl-L-methionine + 3-phenylpyruvate + H2O. Catalyzes the conversion of S-adenosyl-L-methionine (SAM) to carboxy-S-adenosyl-L-methionine (Cx-SAM). This Erwinia tasmaniensis (strain DSM 17950 / CFBP 7177 / CIP 109463 / NCPPB 4357 / Et1/99) protein is Carboxy-S-adenosyl-L-methionine synthase.